The following is a 132-amino-acid chain: Protein NrdI (132 aa).

It belongs to the NrdI family.

In terms of biological role, probably involved in ribonucleotide reductase function. This is Protein NrdI from Bartonella tribocorum (strain CIP 105476 / IBS 506).